Consider the following 560-residue polypeptide: Digoxin reductase (560 aa).

A signal peptide (tat-type signal) is located at residues methionine 1 to alanine 48.

It belongs to the FAD-dependent oxidoreductase 2 family. In terms of assembly, may form a membrane-associated complex with Cgr1. It depends on FAD as a cofactor. [4Fe-4S] cluster serves as cofactor. In terms of processing, predicted to be exported by the Tat system. The position of the signal peptide cleavage has not been experimentally proven.

It is found in the cell membrane. The catalysed reaction is digoxin + 2 Fe(II)-[cytochrome c] + 3 H(+) = dihydrodigoxin + 2 Fe(III)-[cytochrome c]. The enzyme catalyses digitoxin + 2 Fe(II)-[cytochrome c] + 3 H(+) = dihydrodigitoxin + 2 Fe(III)-[cytochrome c]. It catalyses the reaction digoxigenin + 2 Fe(II)-[cytochrome c] + 3 H(+) = dihydrodigoxigenin + 2 Fe(III)-[cytochrome c]. It carries out the reaction ouabain + 2 Fe(II)-[cytochrome c] + 3 H(+) = dihydroouabain + 2 Fe(III)-[cytochrome c]. The catalysed reaction is ouabagenin + 2 Fe(II)-[cytochrome c] + 3 H(+) = dihydroouabagenin + 2 Fe(III)-[cytochrome c]. In terms of biological role, involved in the inactivation of the cardiac medication and plant natural product digoxin, thus decreasing drug efficacy and toxicity. Catalyzes the reduction of the alpha,beta-unsaturated butyrolactone ring of digoxin to the inactive metabolite dihydrodigoxin. Likely uses the cytochrome Cgr1 as the physiological electron donor, encoded by the adjacent gene in the locus. Only reduces digoxin and other cardenolide toxins, such as digitoxin, digoxigenin, ouabain and ouabagenin. Therefore is a specialized enzyme present in some gut bacteria E.lenta that protects their human host against ingested plant toxins. The protein is Digoxin reductase of Eggerthella lenta (strain ATCC 25559 / DSM 2243 / CCUG 17323 / JCM 9979 / KCTC 3265 / NCTC 11813 / VPI 0255 / 1899 B) (Eubacterium lentum).